Here is a 137-residue protein sequence, read N- to C-terminus: Succinate dehydrogenase cytochrome b560 subunit (137 aa).

A run of 2 helical transmembrane segments spans residues 31–51 (AFLA…DLSL) and 60–80 (FFFL…FTLL). His-85 contributes to the heme binding site. Residues 106–126 (VYTSGIIMLFCAAFLALLNII) traverse the membrane as a helical segment.

This sequence belongs to the cytochrome b560 family. Forms part of complex II containing four subunits: a 70 kDa flavoprotein (FP), a 27 kDa iron-sulfur protein (IP), a cytochrome B and a membrane-anchoring protein. The cofactor is heme.

It is found in the mitochondrion inner membrane. It participates in carbohydrate metabolism; tricarboxylic acid cycle. Functionally, membrane-anchoring subunit of succinate dehydrogenase (SDH) that is involved in complex II of the mitochondrial electron transport chain and is responsible for transferring electrons from succinate to ubiquinone (coenzyme Q). This Marchantia polymorpha (Common liverwort) protein is Succinate dehydrogenase cytochrome b560 subunit (SDH3).